We begin with the raw amino-acid sequence, 235 residues long: (5-formylfuran-3-yl)methyl phosphate synthase (235 aa).

Lys-27 acts as the Schiff-base intermediate with substrate in catalysis. Lys-85 acts as the Proton acceptor in catalysis.

Belongs to the MfnB family. As to quaternary structure, homohexamer. Trimer of dimers.

The catalysed reaction is 2 D-glyceraldehyde 3-phosphate = 4-(hydroxymethyl)-2-furancarboxaldehyde phosphate + phosphate + 2 H2O. Its pathway is cofactor biosynthesis; methanofuran biosynthesis. Functionally, catalyzes the formation of 4-(hydroxymethyl)-2-furancarboxaldehyde phosphate (4-HFC-P) from two molecules of glyceraldehyde-3-P (GA-3-P). In Methanocaldococcus jannaschii (strain ATCC 43067 / DSM 2661 / JAL-1 / JCM 10045 / NBRC 100440) (Methanococcus jannaschii), this protein is (5-formylfuran-3-yl)methyl phosphate synthase.